The following is a 290-amino-acid chain: Porphobilinogen deaminase (290 aa).

An S-(dipyrrolylmethanemethyl)cysteine modification is found at Cys238.

This sequence belongs to the HMBS family. In terms of assembly, monomer. The cofactor is dipyrromethane.

The catalysed reaction is 4 porphobilinogen + H2O = hydroxymethylbilane + 4 NH4(+). It functions in the pathway porphyrin-containing compound metabolism; protoporphyrin-IX biosynthesis; coproporphyrinogen-III from 5-aminolevulinate: step 2/4. Its function is as follows. Tetrapolymerization of the monopyrrole PBG into the hydroxymethylbilane pre-uroporphyrinogen in several discrete steps. This is Porphobilinogen deaminase from Caldicellulosiruptor saccharolyticus (strain ATCC 43494 / DSM 8903 / Tp8T 6331).